The primary structure comprises 530 residues: AarF domain-containing protein kinase 1 (530 aa).

The region spanning 155-467 is the Protein kinase domain; that stretch reads SFDDTPLGTA…ASSFLNMSRC (313 aa). ATP is bound by residues 161–169 and lysine 183; that span reads LGTASLAQV. Aspartate 315 acts as the Proton acceptor in catalysis.

It belongs to the protein kinase superfamily. ADCK protein kinase family.

It is found in the mitochondrion. In terms of biological role, appears to be essential for maintaining mitochondrial cristae formation and mitochondrial function by acting via YME1L1 in a kinase-independent manner to regulate essential mitochondrial structural proteins OPA1 and IMMT. The action of this enzyme is not yet clear. It is not known if it has protein kinase activity and what type of substrate it would phosphorylate (Ser, Thr or Tyr). This chain is AarF domain-containing protein kinase 1, found in Homo sapiens (Human).